The primary structure comprises 877 residues: Leucine--tRNA ligase (877 aa).

A 'HIGH' region motif is present at residues 50 to 60; the sequence is PYPSGKLHMGH. The 'KMSKS' region signature appears at 634–638; that stretch reads KMSKS. Lys637 is an ATP binding site.

The protein belongs to the class-I aminoacyl-tRNA synthetase family.

Its subcellular location is the cytoplasm. It catalyses the reaction tRNA(Leu) + L-leucine + ATP = L-leucyl-tRNA(Leu) + AMP + diphosphate. This is Leucine--tRNA ligase from Hydrogenovibrio crunogenus (strain DSM 25203 / XCL-2) (Thiomicrospira crunogena).